Reading from the N-terminus, the 20-residue chain is L-amino-acid oxidase L1 (20 aa).

This sequence belongs to the flavin monoamine oxidase family. FIG1 subfamily. As to quaternary structure, monomer. This is in contrast with most of its orthologs, that are non-covalently linked homodimers. FAD serves as cofactor. N-glycosylated. Expressed by the venom gland.

Its subcellular location is the secreted. It carries out the reaction an L-alpha-amino acid + O2 + H2O = a 2-oxocarboxylate + H2O2 + NH4(+). The catalysed reaction is L-leucine + O2 + H2O = 4-methyl-2-oxopentanoate + H2O2 + NH4(+). The enzyme catalyses L-phenylalanine + O2 + H2O = 3-phenylpyruvate + H2O2 + NH4(+). It catalyses the reaction L-tryptophan + O2 + H2O = indole-3-pyruvate + H2O2 + NH4(+). It carries out the reaction L-methionine + O2 + H2O = 4-methylsulfanyl-2-oxobutanoate + H2O2 + NH4(+). The catalysed reaction is L-isoleucine + O2 + H2O = (S)-3-methyl-2-oxopentanoate + H2O2 + NH4(+). The enzyme catalyses L-tyrosine + O2 + H2O = 3-(4-hydroxyphenyl)pyruvate + H2O2 + NH4(+). Catalyzes an oxidative deamination of predominantly hydrophobic and aromatic L-amino acids, thus producing hydrogen peroxide that may contribute to the diverse toxic effects of this enzyme. Is active on L-Met, L-Ile, L-Leu, L-Phe, L-Trp, and L-Tyr. Exhibits diverse biological activities, such as hemorrhage, hemolysis, edema, apoptosis of vascular endothelial cells or tumor cell lines, antibacterial and antiparasitic activities, as well as regulation of platelet aggregation. Its effect on platelets is controversial, since it either induces aggregation or inhibits agonist-induced aggregation. These different effects are probably due to different experimental conditions. This chain is L-amino-acid oxidase L1, found in Daboia russelii (Russel's viper).